The chain runs to 552 residues: MFS-type transporter atr4 (552 aa).

A disordered region spans residues 1–102 (MEDPKSLSAP…NIVDWDGPND (102 aa)). Residues 16–27 (ADTTTADETPAA) are compositionally biased toward low complexity. Polar residues-rich tracts occupy residues 38-47 (KAGSESSENT) and 71-80 (LRNSSVSRSN). Asn-73 is a glycosylation site (N-linked (GlcNAc...) asparagine). The next 6 helical transmembrane spans lie at 118–138 (IFLV…LATG), 153–173 (LGSL…LVIA), 182–202 (MPLY…CALG), 214–234 (LQGC…SDLI), 244–264 (GIYA…GGFL), and 272–292 (WLMW…FVVM). N-linked (GlcNAc...) asparagine glycosylation occurs at Asn-314. 6 helical membrane-spanning segments follow: residues 346–366 (PIIF…YLLF), 385–405 (GLVY…FGVF), 425–445 (LLPM…YGWS), 452–472 (WIVP…TLVC), 498–518 (VVGA…GIGW), and 521–541 (SLLA…YVYG).

This sequence belongs to the major facilitator superfamily.

The protein resides in the cell membrane. MFS-type transporter; part of the gene cluster that mediates the biosynthesis of atranorin, a depside of polyketide origin that accumulates in the cortical or medullary layers of lichen thalli. The protein is MFS-type transporter atr4 of Stereocaulon alpinum (Alpine snow lichen).